The primary structure comprises 458 residues: Monomethylamine methyltransferase MtmB (458 aa).

O202 is a non-standard amino acid (pyrrolysine).

Belongs to the monomethylamine methyltransferase family. As to quaternary structure, can form a complex with MtmC.

It catalyses the reaction Co(I)-[methylamine-specific corrinoid protein] + methylamine + H(+) = methyl-Co(III)-[methylamine-specific corrinoid protein] + NH4(+). It functions in the pathway one-carbon metabolism; methanogenesis from methylamine. Functionally, catalyzes the transfer of the methyl group from monomethylamine to the corrinoid cofactor of MtmC. This is Monomethylamine methyltransferase MtmB (mtmB1) from Methanosarcina mazei (strain ATCC BAA-159 / DSM 3647 / Goe1 / Go1 / JCM 11833 / OCM 88) (Methanosarcina frisia).